A 364-amino-acid polypeptide reads, in one-letter code: Fructose-bisphosphate aldolase A (364 aa).

A Phosphotyrosine modification is found at Tyr5. Residue Thr9 is modified to Phosphothreonine. Ser36 and Ser39 each carry phosphoserine. The residue at position 42 (Lys42) is an N6-acetyllysine; alternate. Lys42 participates in a covalent cross-link: Glycyl lysine isopeptide (Lys-Gly) (interchain with G-Cter in SUMO1); alternate. A Glycyl lysine isopeptide (Lys-Gly) (interchain with G-Cter in SUMO2); alternate cross-link involves residue Lys42. A beta-D-fructose 1,6-bisphosphate-binding site is contributed by Arg43. Ser46 carries the post-translational modification Phosphoserine. Lys99 carries the post-translational modification N6-(2-hydroxyisobutyryl)lysine. N6-acetyllysine is present on Lys108. Position 111 is an N6-acetyllysine; alternate (Lys111). Position 111 is an N6-malonyllysine; alternate (Lys111). Position 132 is a phosphoserine (Ser132). Position 147 is an N6-(2-hydroxyisobutyryl)lysine (Lys147). Glu188 serves as the catalytic Proton acceptor. The Schiff-base intermediate with dihydroxyacetone-P role is filled by Lys230. Ser272 is subject to Phosphoserine. Beta-D-fructose 1,6-bisphosphate-binding positions include 272-274 (SGG), Ser301, and Arg304. At Lys312 the chain carries N6-malonyllysine. Residue Lys330 is modified to N6-acetyllysine.

This sequence belongs to the class I fructose-bisphosphate aldolase family. Homotetramer. Interacts with SNX9 and WAS. Interacts with FBP2; the interaction blocks FBP2 inhibition by physiological concentrations of AMP and reduces inhibition by Ca(2+).

The protein localises to the cytoplasm. The protein resides in the myofibril. It is found in the sarcomere. Its subcellular location is the i band. It localises to the m line. It catalyses the reaction beta-D-fructose 1,6-bisphosphate = D-glyceraldehyde 3-phosphate + dihydroxyacetone phosphate. Its pathway is carbohydrate degradation; glycolysis; D-glyceraldehyde 3-phosphate and glycerone phosphate from D-glucose: step 4/4. Catalyzes the reversible conversion of beta-D-fructose 1,6-bisphosphate (FBP) into two triose phosphate and plays a key role in glycolysis and gluconeogenesis. In addition, may also function as scaffolding protein. This Pongo abelii (Sumatran orangutan) protein is Fructose-bisphosphate aldolase A (ALDOA).